Reading from the N-terminus, the 851-residue chain is UPF0182 protein CYA_1810 (851 aa).

7 helical membrane passes run 7–27 (GLVL…LASF), 47–67 (VLAR…VVGS), 76–96 (ASTA…AWSL), 141–161 (FNLV…ELGL), 168–188 (LALS…LFLL), 220–240 (LPAT…FWAL), and 259–279 (WASS…FGLL).

It belongs to the UPF0182 family.

The protein resides in the cell membrane. This is UPF0182 protein CYA_1810 from Synechococcus sp. (strain JA-3-3Ab) (Cyanobacteria bacterium Yellowstone A-Prime).